A 31-amino-acid chain; its full sequence is GVIPCGESCVFIPCISSVVGCSCKNKVCYRN.

The segment at residues 1–31 (GVIPCGESCVFIPCISSVVGCSCKNKVCYRN) is a cross-link (cyclopeptide (Gly-Asn)). 3 disulfides stabilise this stretch: cysteine 5/cysteine 21, cysteine 9/cysteine 23, and cysteine 14/cysteine 28.

This is a cyclic peptide. In terms of tissue distribution, expressed in pedicel, root and stem but not in leaf and fruit (at protein level).

Its function is as follows. Probably participates in a plant defense mechanism. This is Chassatide C5 from Chassalia chartacea (Chassalia curviflora).